The primary structure comprises 286 residues: Lipid phosphate phosphatase epsilon 2, chloroplastic (286 aa).

The transit peptide at 1-60 directs the protein to the chloroplast; the sequence is MAASSSSLLLLHKPTYNFHFAASSVPTYINSARFRISSSIFPLDRRRRRRIWSVSGFKSM. The next 5 membrane-spanning stretches (helical) occupy residues 133–149, 173–193, 194–214, 226–246, and 260–280; these read LWAVIGSVSNSVLSVAL, AQSISFISVFSVFSVMEWLGT, NVLSLFLSGFILALGSYFTWL, VVVGAIVGSVYSTLWYVTWNS, and IALFLVAAASALGFAVYVLLN.

This sequence belongs to the PA-phosphatase related phosphoesterase family. Expressed in root tips, root branch points, cotyledons and leaves.

It localises to the plastid. The protein localises to the chloroplast inner membrane. Inhibited by Mg(2+). Functionally, exhibits phosphatidate phosphatase (PAP) activity in vitro. May play a secondary role as PAP in plastids. The chain is Lipid phosphate phosphatase epsilon 2, chloroplastic (LPPE2) from Arabidopsis thaliana (Mouse-ear cress).